Here is a 1369-residue protein sequence, read N- to C-terminus: MAHFSCFPGALALSAFRQQRLLSTLKRIDPEIDAVSAQYLHFVAADAPLSADDAARVQALLTYGSPASAETEGDRFVVIPRFGTISPWASKATEIARHCALPQIHRIERGVEFTVTCKKGLLRGLTGGRKQLDEATRAAVAAHLHDRMTEIVVATREAGYGLFDVLPAKALRFVDLGSGDAAAGRGALEAANTEMGLALSDDEIDYLVDAYRKLGRNPTDVELMMFAQANSEHCRHKIFNADWTIDGETQDKSLFAMIRNTHQLAPQGTVVAYSDNAAVMEGGMAERWFPHAGTDGETGVPQYGRREALTHTLMKVETHNHPTAISPFPGASTGAGGEIRDEGATGRGAKPKAGLTGFTVSNLLLPEAVQSWENARDTAQPAAQRNPGDTAPGPVGKPDRIASPLQIMIEGPIGGAAFNNEFGRPNLGGYFRVYEQNVGGTVRGYHKPIMIAGGIGNIDAGHTHKHGLPAGTLLVQLGGPGMRIGMGGGAASSMATGTNTADLDFDSVQRGNPEMQRRAQEVINACWALGEDNPILSIHDVGAGGISNAFPELVDGADRGARFDLRQVHLEESGLSPAEIWCNESQERYTLAIAPGDFPRFQAMCERERAPFSVVGFATEEQQLQVVDGDAPADAVEHFPVNMPMDVLLGKPPRMHRDVRRVAQALPEVDVTGLDLETVARDVLRHPTVASKSFLITIGDRTVGGLNTRDQMVGPWQVPVADVAVTTLDYKGYAGEAMTMGERTPLAVIDAPASGRMAIGEAITNIAAAPIASLAQLKLSANWMAACGVDGEDARLYDTVKAVGMELCPALGISIPVGKDSLSMRTKWDDAGEAKEVVAPVSLIVSAFAPVTDVRKTLTPQLKPVASAGEAADTTLIVIDLGHGKHRLGGSILAQVTQQIGNSVPDVGDAEDLKRFFAAIQQLNAAGMLLAYHDRSDGGLWATVCEMAFAGHCGVSINVDMLTLDGAHASDYGDAKNWAQQVSGRRADMTLRALFAEELGAVIQVPAAQRDAVFAVLREHGLAACSHVIGAPNASGQIEIWRDAKKVFSAPRIELQRAWTDVSWRIASLRDNPECTQSEYDRLLDAEDPGISPNLTFDLAEDVAAPFIATGARPRMAILREQGVNSQVEMAYAMDKAGFDAYDVHMSDLLAGRTRLADFKGFVACGGFSYGDVLGAGEGWAKTILFNGMLAEQFAAFFNRADSIALGVCNGCQMMANLAPIIPGAGAWPKFTRNQSEQYEGRLVTVQVEASPSIFYAGMEGSRIPIVVAHGEGYADFSQQGDIGKVAVGLRYVDNRGEVTQTYPLNPNGSPQGIASVTTHDGRFTVLMPHPERVFRAVQMSWHPKDWAAAGDGSSPWMRMFRNARKQMG.

Disordered regions lie at residues 321 to 352 (HPTA…AKPK) and 373 to 400 (ENAR…KPDR). 330 to 341 (GASTGAGGEIRD) is an ATP binding site. An ATP-binding site is contributed by alanine 721. 4 residues coordinate Mg(2+): aspartate 722, glutamate 761, asparagine 765, and aspartate 934. Serine 936 provides a ligand contact to ATP. A Glutamine amidotransferase type-1 domain is found at 1116-1369 (MAILREQGVN…MFRNARKQMG (254 aa)). Cysteine 1209 acts as the Nucleophile in catalysis. Catalysis depends on residues histidine 1330 and glutamate 1332.

This sequence in the N-terminal section; belongs to the FGAMS family. As to quaternary structure, monomer.

It localises to the cytoplasm. It catalyses the reaction N(2)-formyl-N(1)-(5-phospho-beta-D-ribosyl)glycinamide + L-glutamine + ATP + H2O = 2-formamido-N(1)-(5-O-phospho-beta-D-ribosyl)acetamidine + L-glutamate + ADP + phosphate + H(+). Its pathway is purine metabolism; IMP biosynthesis via de novo pathway; 5-amino-1-(5-phospho-D-ribosyl)imidazole from N(2)-formyl-N(1)-(5-phospho-D-ribosyl)glycinamide: step 1/2. Its function is as follows. Phosphoribosylformylglycinamidine synthase involved in the purines biosynthetic pathway. Catalyzes the ATP-dependent conversion of formylglycinamide ribonucleotide (FGAR) and glutamine to yield formylglycinamidine ribonucleotide (FGAM) and glutamate. This Ralstonia nicotianae (strain ATCC BAA-1114 / GMI1000) (Ralstonia solanacearum) protein is Phosphoribosylformylglycinamidine synthase.